We begin with the raw amino-acid sequence, 346 residues long: Structure-specific endonuclease subunit SLX1 (346 aa).

Residues 22–105 enclose the GIY-YIG domain; it reads DFYGVYLLRS…QHPYQTRHIK (84 aa). The SLX1-type zinc-finger motif lies at 216-306; the sequence is CFICNETIDY…TPLQGKCLSC (91 aa).

The protein belongs to the SLX1 family. As to quaternary structure, forms a heterodimer with SLX4. A divalent metal cation serves as cofactor.

It is found in the nucleus. Functionally, catalytic subunit of the SLX1-SLX4 structure-specific endonuclease that resolves DNA secondary structures generated during DNA repair and recombination. Has endonuclease activity towards branched DNA substrates, introducing single-strand cuts in duplex DNA close to junctions with ss-DNA. This chain is Structure-specific endonuclease subunit SLX1, found in Debaryomyces hansenii (strain ATCC 36239 / CBS 767 / BCRC 21394 / JCM 1990 / NBRC 0083 / IGC 2968) (Yeast).